Consider the following 496-residue polypeptide: tRNA-2-methylthio-N(6)-dimethylallyladenosine synthase (496 aa).

In terms of domain architecture, MTTase N-terminal spans 10–126 (RTYEVRTYGC…LPALLERARV (117 aa)). [4Fe-4S] cluster is bound by residues C19, C55, C89, C163, C167, and C170. The 232-residue stretch at 149-380 (RESAYAAWVS…ALVNEIAWEE (232 aa)) folds into the Radical SAM core domain. One can recognise a TRAM domain in the interval 382-451 (KRLVGRRVEL…PHHLVADGPV (70 aa)). The disordered stretch occupies residues 465–496 (ARNAAPAPSSGVTLGMPTVGAPAPLPDAPACR). Residues 487–496 (APLPDAPACR) show a composition bias toward pro residues.

The protein belongs to the methylthiotransferase family. MiaB subfamily. As to quaternary structure, monomer. [4Fe-4S] cluster serves as cofactor.

The protein localises to the cytoplasm. It catalyses the reaction N(6)-dimethylallyladenosine(37) in tRNA + (sulfur carrier)-SH + AH2 + 2 S-adenosyl-L-methionine = 2-methylsulfanyl-N(6)-dimethylallyladenosine(37) in tRNA + (sulfur carrier)-H + 5'-deoxyadenosine + L-methionine + A + S-adenosyl-L-homocysteine + 2 H(+). Functionally, catalyzes the methylthiolation of N6-(dimethylallyl)adenosine (i(6)A), leading to the formation of 2-methylthio-N6-(dimethylallyl)adenosine (ms(2)i(6)A) at position 37 in tRNAs that read codons beginning with uridine. In Nocardioides sp. (strain ATCC BAA-499 / JS614), this protein is tRNA-2-methylthio-N(6)-dimethylallyladenosine synthase.